A 235-amino-acid polypeptide reads, in one-letter code: Flagellar L-ring protein (235 aa).

An N-terminal signal peptide occupies residues 1-18 (MNKIAGTLFLLAGLAMAG). Cys-19 carries the N-palmitoyl cysteine lipid modification. The S-diacylglycerol cysteine moiety is linked to residue Cys-19.

This sequence belongs to the FlgH family. As to quaternary structure, the basal body constitutes a major portion of the flagellar organelle and consists of four rings (L,P,S, and M) mounted on a central rod.

The protein resides in the cell outer membrane. It localises to the bacterial flagellum basal body. Functionally, assembles around the rod to form the L-ring and probably protects the motor/basal body from shearing forces during rotation. The sequence is that of Flagellar L-ring protein from Chelativorans sp. (strain BNC1).